The chain runs to 201 residues: Lipopolysaccharide core heptose(II)-phosphate phosphatase (201 aa).

A signal peptide spans M1 to A33.

The protein belongs to the phosphoglycerate mutase family. Ais subfamily.

It is found in the periplasm. It functions in the pathway bacterial outer membrane biogenesis; lipopolysaccharide metabolism. Its function is as follows. Catalyzes the dephosphorylation of heptose(II) of the outer membrane lipopolysaccharide core. This chain is Lipopolysaccharide core heptose(II)-phosphate phosphatase, found in Salmonella typhi.